Reading from the N-terminus, the 409-residue chain is Probable aspartate/prephenate aminotransferase (409 aa).

L-aspartate-binding residues include glycine 39, tryptophan 125, and asparagine 175. Lysine 239 carries the post-translational modification N6-(pyridoxal phosphate)lysine. Arginine 375 is a binding site for L-aspartate.

Belongs to the class-I pyridoxal-phosphate-dependent aminotransferase family. As to quaternary structure, homodimer. It depends on pyridoxal 5'-phosphate as a cofactor.

It localises to the cytoplasm. It carries out the reaction L-aspartate + 2-oxoglutarate = oxaloacetate + L-glutamate. The enzyme catalyses L-arogenate + 2-oxoglutarate = prephenate + L-glutamate. Functionally, catalyzes the reversible conversion of aspartate and 2-oxoglutarate to glutamate and oxaloacetate. Can also transaminate prephenate in the presence of glutamate. This Rickettsia felis (strain ATCC VR-1525 / URRWXCal2) (Rickettsia azadi) protein is Probable aspartate/prephenate aminotransferase (aatA).